Here is a 510-residue protein sequence, read N- to C-terminus: Lysine--tRNA ligase (510 aa).

Mg(2+) contacts are provided by glutamate 420 and glutamate 427.

Belongs to the class-II aminoacyl-tRNA synthetase family. As to quaternary structure, homodimer. Mg(2+) is required as a cofactor.

Its subcellular location is the cytoplasm. It catalyses the reaction tRNA(Lys) + L-lysine + ATP = L-lysyl-tRNA(Lys) + AMP + diphosphate. This is Lysine--tRNA ligase from Ralstonia nicotianae (strain ATCC BAA-1114 / GMI1000) (Ralstonia solanacearum).